Here is a 205-residue protein sequence, read N- to C-terminus: Putative 3-methyladenine DNA glycosylase (205 aa).

Belongs to the DNA glycosylase MPG family.

The chain is Putative 3-methyladenine DNA glycosylase from Clostridium acetobutylicum (strain ATCC 824 / DSM 792 / JCM 1419 / IAM 19013 / LMG 5710 / NBRC 13948 / NRRL B-527 / VKM B-1787 / 2291 / W).